The chain runs to 87 residues: Acylphosphatase (87 aa).

Residues 1–87 form the Acylphosphatase-like domain; sequence MAWVHGRVQG…EDYQDFRIRY (87 aa). Catalysis depends on residues Arg14 and Asn32.

The protein belongs to the acylphosphatase family.

It catalyses the reaction an acyl phosphate + H2O = a carboxylate + phosphate + H(+). In Cronobacter sakazakii (strain ATCC BAA-894) (Enterobacter sakazakii), this protein is Acylphosphatase (acyP).